The following is a 488-amino-acid chain: MFVTFICFLACLTCSYGQPRAQQYVVPSAKLEAIYPKGLRVSIPDDGFSLFAFHGKLNEEMDGLEAGHWARDITKPKEGRWTFRDRNVKLKLGDKIYFWTYVIKDGLGYRQDNGEWTVTEFVNEDGTPADTSLEPTTAPTPVRPDQPNQPIPTHRPDPPCTVSATMVDGRKSVCQGTLLFSEEFEKANLKDLANWEAEVKFPEEPDYPFNVYMVDGTLELEDGSLVLTPKLLESRFHAGILNDALDLTNRCSGQVDTTECRRQASGAQILPPVMTGKITTKNKFTFKFGRVEVRAKLPAGNWLLPEINLEPKDNVFGSRRYESGLMRVAFAKGNAVFAKKLNGGPVLADTEPFRSLLMKEKIGIDNWNRDYHNYTLIWKQDGIDMLVDGEKYGSISPGEGFYALGREHAVPHAAHWLRGSVMAPLDQYFFLSLGLRVGGVHDFADSPDKPWKNRSNKAVLNFWNDRDNWFPTWFDANLKVDYVRVYAL.

The first 17 residues, 1-17 (MFVTFICFLACLTCSYG), serve as a signal peptide directing secretion. The tract at residues 18–135 (QPRAQQYVVP…GTPADTSLEP (118 aa)) is binds to curdlan, laminarihexaose and laminarin. The complex formation with laminarin induces self-association of the complexes into a macro structure, likely containing six protein and three laminarin molecules. The macro structures may form a platform on a microbial surface for recruitment of downstream proteases, as a means of amplification of the initial signal of pathogen recognition for the activation of the phenoloxidase cascade. The interval 18–198 (QPRAQQYVVP…LKDLANWEAE (181 aa)) is binds to curdlan, lipopolysaccharide and lipoteichoic acid, activates the phenoloxidase cascade and is resistant to proteolytic degradation by trypsin or chymotrypsin, but is not as effective as the full-length protein in aggregation of microorganisms. The CBM39 domain occupies 24 to 123 (YVVPSAKLEA…GEWTVTEFVN (100 aa)). The binds to laminarihexaose and laminarin stretch occupies residues 24 to 127 (YVVPSAKLEA…VTEFVNEDGT (104 aa)). Substrate-binding positions include Asp-72, 99-101 (WTY), and Arg-110. Residues 125-158 (DGTPADTSLEPTTAPTPVRPDQPNQPIPTHRPDP) are disordered. Residues 129–139 (ADTSLEPTTAP) are compositionally biased toward polar residues. Pro residues predominate over residues 141–150 (PVRPDQPNQP). The region spanning 144-488 (PDQPNQPIPT…KVDYVRVYAL (345 aa)) is the GH16 domain. The interval 199–488 (VKFPEEPDYP…KVDYVRVYAL (290 aa)) is binds to laminarin, but not to curdlan, does not activate the phenoloxidase cascade, is susceptible to proteinase digestion by trypsin or chymotrypsin and does not cause aggregation of microorganisms. N-linked (GlcNAc...) asparagine glycosylation is found at Asn-373 and Asn-453.

It belongs to the insect beta-1,3-glucan binding protein family. In terms of assembly, monomer. In terms of processing, the N-terminus is blocked. In terms of tissue distribution, fat body and hemolymph.

It localises to the secreted. In terms of biological role, involved in the recognition of invading microorganisms causing their aggregation. Activates the phenoloxidase cascade. Binds specifically to beta-1,3-glucan. Binds to curdlan, a linear water-insoluble beta-1,3-glucan polysaccharide, and to laminarin, a water-soluble beta-1,3-glucan polysaccharide containing beta-1,6 branches. Also binds to lipopolysaccharide and lipoteichoic acid. The protein is Beta-1,3-glucan-binding protein of Plodia interpunctella (Indianmeal moth).